We begin with the raw amino-acid sequence, 192 residues long: Probable apo-citrate lyase phosphoribosyl-dephospho-CoA transferase (192 aa).

The protein belongs to the CitX family.

It carries out the reaction apo-[citrate lyase ACP] + 2'-(5''-triphospho-alpha-D-ribosyl)-3'-dephospho-CoA = holo-[citrate lyase ACP] + diphosphate. Functionally, transfers 2-(5''-triphosphoribosyl)-3'-dephosphocoenzyme-A on a serine residue to the apo-acyl carrier protein (gamma chain) of the citrate lyase to yield holo-acyl carrier protein. This chain is Probable apo-citrate lyase phosphoribosyl-dephospho-CoA transferase, found in Streptococcus pyogenes serotype M3 (strain ATCC BAA-595 / MGAS315).